A 598-amino-acid chain; its full sequence is MPTISVGRDRLFAALGESYTQEKFEELCFSFGIELDDVTTEKAIIRKEKHIDEEADDDEEIIYKIEIPANRPDLLCLEGLAQSLRVFIEKQEIPTYTLADISKDKILQMNVKPETSKIRPFVVCAVLRGVTFDEARYNSFIDLQDKLHQNICRRRSLVAIGTHDLDTLQGPFTYEALPPTDINFVPLKQTKSFRADELIEFYKSDMKLKKFLHIIENSPVFPVLYDSKRTVLSLPPIINGAHSAITLQTKNVFIECTATDLTKAKIVLNTMVTTFSEFCARKFEIEPVEVTYDDGKSYIYPDLAVYDMEVPLSFITDSIGVSLKVEQVTSLLTRMQLQAEQAKSSDNQCAIKVHVPPSRSDVLHPCDVMEDVAIAYGFNNIPTRKPASIKPLTLNELTDLLRIEIAMCVYTEVVTWLLCSHKENFAMLNREDVNSAVIVGNPRSADFEAMRRALMPGLLKTVGHNNKYPKPIKIFEISDVVMLDESKDVGASNRRHLAALYCGATSGFELIHGLVDRIMEVMAIPFLTIHENNVPINEKDGYYVKLSQEPEFLPGRQASIIVRGKHIGNFGIVHPEVLNNFDIPDPCSYLELDIEAIL.

The B5 domain maps to 303 to 383 (LAVYDMEVPL…IAYGFNNIPT (81 aa)). Asp361, Asp367, Glu370, and Asp371 together coordinate Mg(2+).

It belongs to the phenylalanyl-tRNA synthetase beta subunit family. Type 2 subfamily. In terms of assembly, tetramer of two alpha and two beta subunits. Mg(2+) serves as cofactor.

The protein localises to the cytoplasm. The protein resides in the cytosol. The enzyme catalyses tRNA(Phe) + L-phenylalanine + ATP = L-phenylalanyl-tRNA(Phe) + AMP + diphosphate + H(+). The sequence is that of Phenylalanine--tRNA ligase beta subunit, cytoplasmic from Arabidopsis thaliana (Mouse-ear cress).